The primary structure comprises 1351 residues: Non-structural polyprotein 1AB (1351 aa).

Residues 105-144 (LVQDHKAKTREVEDLKSQLSQLRMEHEILRHEYERLKLKS) adopt a coiled-coil conformation. Transmembrane regions (helical) follow at residues 153–173 (LKVL…TNGA), 231–251 (LVFQ…VYYM), 257–277 (PIVM…LLAV), 304–324 (ISIL…TFMA), and 337–357 (VVFA…PPWV). Catalysis depends on charge relay system; for serine protease activity residues His-452, Asp-481, and Ser-544. Residues 579-635 (EVRKISKREQELEDRVKQLEGMLNMDQAYVDSNLIVDLVREAVQREMKVLRTELANL) adopt a coiled-coil conformation. The residue at position 662 (Tyr-662) is an O-(5'-phospho-RNA)-tyrosine. Residues 687-699 (YDDEDEQSEEEAG) show a composition bias toward acidic residues. 2 disordered regions span residues 687–708 (YDDE…DPGD) and 822–842 (RKRV…GPEE). Over residues 822 to 832 (RKRVQQPKKLQ) the composition is skewed to basic residues. Residues 833–842 (RGPEDPGPEE) are compositionally biased toward basic and acidic residues. A RdRp catalytic domain is found at 1085 to 1217 (PYWIEFDWTR…TSPSVPNDYV (133 aa)).

Belongs to the astroviridae polyprotein 1AB family. Monomer. Cleaved by the viral and host proteases. The protease is probably autocatalytically cleaved.

Its subcellular location is the host membrane. It catalyses the reaction RNA(n) + a ribonucleoside 5'-triphosphate = RNA(n+1) + diphosphate. Responsible for the cleavage of the polyprotein into functional products. In terms of biological role, protein covalently attached to the 5' extremity of the genomic and subgenomic RNAs. It may serve as a primer for the replicase. The protein is Non-structural polyprotein 1AB (ORF1) of Ovis aries (Sheep).